The following is a 529-amino-acid chain: Bifunctional purine biosynthesis protein PurH (529 aa).

The region spanning 1–148 (MQQPRPVRRA…KNHKDVAIVV (148 aa)) is the MGS-like domain.

The protein belongs to the PurH family.

The enzyme catalyses (6R)-10-formyltetrahydrofolate + 5-amino-1-(5-phospho-beta-D-ribosyl)imidazole-4-carboxamide = 5-formamido-1-(5-phospho-D-ribosyl)imidazole-4-carboxamide + (6S)-5,6,7,8-tetrahydrofolate. It catalyses the reaction IMP + H2O = 5-formamido-1-(5-phospho-D-ribosyl)imidazole-4-carboxamide. It participates in purine metabolism; IMP biosynthesis via de novo pathway; 5-formamido-1-(5-phospho-D-ribosyl)imidazole-4-carboxamide from 5-amino-1-(5-phospho-D-ribosyl)imidazole-4-carboxamide (10-formyl THF route): step 1/1. The protein operates within purine metabolism; IMP biosynthesis via de novo pathway; IMP from 5-formamido-1-(5-phospho-D-ribosyl)imidazole-4-carboxamide: step 1/1. This Cronobacter sakazakii (strain ATCC BAA-894) (Enterobacter sakazakii) protein is Bifunctional purine biosynthesis protein PurH.